Consider the following 119-residue polypeptide: Small ribosomal subunit protein bS16 (119 aa).

Residues 96–107 (RKKRRAYRQRRS) show a composition bias toward basic residues. The segment at 96–119 (RKKRRAYRQRRSTQREEAAKDATK) is disordered. A compositionally biased stretch (basic and acidic residues) spans 108-119 (TQREEAAKDATK).

The protein belongs to the bacterial ribosomal protein bS16 family.

This chain is Small ribosomal subunit protein bS16, found in Chlamydia pneumoniae (Chlamydophila pneumoniae).